Here is a 121-residue protein sequence, read N- to C-terminus: Flagellar protein FliT (121 aa).

Residues 1–50 (MNNAPHLYFAWQQLVEKSQLMLRLATEEQWDELIASEMAYVNAVQEIAHL) are required for homodimerization. Residues 60–98 (MQEQLRPMLRLILDNESKVKQLLQIRMDELAKLVGQSSV) form a fliD binding region.

Belongs to the FliT family. Homodimer. Interacts with FliD and FlhC.

It is found in the cytoplasm. The protein localises to the cytosol. Dual-function protein that regulates the transcription of class 2 flagellar operons and that also acts as an export chaperone for the filament-capping protein FliD. As a transcriptional regulator, acts as an anti-FlhDC factor; it directly binds FlhC, thus inhibiting the binding of the FlhC/FlhD complex to class 2 promoters, resulting in decreased expression of class 2 flagellar operons. As a chaperone, effects FliD transition to the membrane by preventing its premature polymerization, and by directing it to the export apparatus. This is Flagellar protein FliT from Escherichia coli O9:H4 (strain HS).